A 228-amino-acid polypeptide reads, in one-letter code: Protein TIFY 10a (228 aa).

Residues Arg-75–Lys-110 form the Tify domain. The Jas signature appears at Pro-164–Gln-189. The short motif at Ala-166 to Arg-173 is the Nuclear localization signal element. The disordered stretch occupies residues Leu-175–Gln-228.

It belongs to the TIFY/JAZ family. Interacts with COI1A and COI1B in a coronatine-dependent manner. Coronatine is an analog of jasmonoyl isoleucine (JA-Ile). Ubiquitinated. Targeted for degradation by the SCF(COI1) E3 ubiquitin ligase-proteasome pathway during jasmonate signaling.

It localises to the nucleus. Functionally, repressor of jasmonate responses. This chain is Protein TIFY 10a, found in Oryza sativa subsp. japonica (Rice).